We begin with the raw amino-acid sequence, 202 residues long: NAD(P)H-quinone oxidoreductase subunit I (202 aa).

4Fe-4S ferredoxin-type domains lie at 55–84 (GRIH…VDWV) and 95–124 (KNYS…MTEE). Residues Cys64, Cys67, Cys70, Cys74, Cys104, Cys107, Cys110, and Cys114 each coordinate [4Fe-4S] cluster. Over residues 168–187 (EYDPHVVPSDRPRAGQRPEE) the composition is skewed to basic and acidic residues. The interval 168–202 (EYDPHVVPSDRPRAGQRPEELVDQYKQAAAANEEN) is disordered.

Belongs to the complex I 23 kDa subunit family. As to quaternary structure, NDH-1 is composed of at least 11 different subunits. [4Fe-4S] cluster is required as a cofactor.

The protein resides in the cellular thylakoid membrane. It catalyses the reaction a plastoquinone + NADH + (n+1) H(+)(in) = a plastoquinol + NAD(+) + n H(+)(out). The enzyme catalyses a plastoquinone + NADPH + (n+1) H(+)(in) = a plastoquinol + NADP(+) + n H(+)(out). In terms of biological role, NDH-1 shuttles electrons from an unknown electron donor, via FMN and iron-sulfur (Fe-S) centers, to quinones in the respiratory and/or the photosynthetic chain. The immediate electron acceptor for the enzyme in this species is believed to be plastoquinone. Couples the redox reaction to proton translocation, and thus conserves the redox energy in a proton gradient. The sequence is that of NAD(P)H-quinone oxidoreductase subunit I from Synechococcus elongatus (strain ATCC 33912 / PCC 7942 / FACHB-805) (Anacystis nidulans R2).